Here is a 307-residue protein sequence, read N- to C-terminus: Cyclooctat-9-en-7-ol synthase (307 aa).

Mg(2+) contacts are provided by aspartate 110, asparagine 220, serine 224, and glutamate 228. The DDXXD motif; degenerate signature appears at 110–113 (DDMD). Residues 220–228 (NDFYSYDRE) carry the NSE/DTE motif motif.

It belongs to the terpene synthase family. In terms of assembly, homodimer. It depends on Mg(2+) as a cofactor.

The catalysed reaction is geranylgeranyl diphosphate + H2O = cyclooctat-9-en-7-ol + diphosphate. Catalyzes the cyclization of the linear isoprenoid intermediate geranylgeranyl diphosphate to tricycclic cyclooctat-9-en-7-ol in the cyclooctatin biosynthesis pathway. Cyclooctatin is a potent inhibitor of lysophospholipase. The protein is Cyclooctat-9-en-7-ol synthase of Streptomyces melanosporofaciens.